Consider the following 151-residue polypeptide: uncharacterized protein (151 aa).

The tract at residues 1–151 (MAELASIIRP…SSKTTTLKAR (151 aa)) is disordered. The segment covering 33–45 (STGLSDLLMLLQS) has biased composition (low complexity). Residues 53-64 (RARRRTVCRPRR) are compositionally biased toward basic residues. Residues 108–123 (SSSSNTSSGTATSGES) show a composition bias toward low complexity. The span at 126–141 (ADWRDSSSASDDDRIP) shows a compositional bias: basic and acidic residues.

This is an uncharacterized protein from Aotus trivirgatus (Three-striped night monkey).